We begin with the raw amino-acid sequence, 118 residues long: Large ribosomal subunit protein uL22 (118 aa).

Belongs to the universal ribosomal protein uL22 family. In terms of assembly, part of the 50S ribosomal subunit.

Its function is as follows. This protein binds specifically to 23S rRNA; its binding is stimulated by other ribosomal proteins, e.g. L4, L17, and L20. It is important during the early stages of 50S assembly. It makes multiple contacts with different domains of the 23S rRNA in the assembled 50S subunit and ribosome. The globular domain of the protein is located near the polypeptide exit tunnel on the outside of the subunit, while an extended beta-hairpin is found that lines the wall of the exit tunnel in the center of the 70S ribosome. This Pediococcus pentosaceus (strain ATCC 25745 / CCUG 21536 / LMG 10740 / 183-1w) protein is Large ribosomal subunit protein uL22.